The primary structure comprises 109 residues: Spermidine export protein MdtI (109 aa).

Transmembrane regions (helical) follow at residues Phe-6–Leu-26, Trp-36–Val-56, Ala-64–Phe-84, and Leu-88–Leu-108.

Belongs to the drug/metabolite transporter (DMT) superfamily. Small multidrug resistance (SMR) (TC 2.A.7.1) family. MdtI subfamily. Forms a complex with MdtJ.

It localises to the cell inner membrane. Its function is as follows. Catalyzes the excretion of spermidine. This chain is Spermidine export protein MdtI, found in Yersinia pseudotuberculosis serotype O:1b (strain IP 31758).